Reading from the N-terminus, the 251-residue chain is Ubiquinone/menaquinone biosynthesis C-methyltransferase UbiE (251 aa).

3 residues coordinate S-adenosyl-L-methionine: Thr-74, Asp-92, and Ser-132.

The protein belongs to the class I-like SAM-binding methyltransferase superfamily. MenG/UbiE family.

The enzyme catalyses a 2-demethylmenaquinol + S-adenosyl-L-methionine = a menaquinol + S-adenosyl-L-homocysteine + H(+). It carries out the reaction a 2-methoxy-6-(all-trans-polyprenyl)benzene-1,4-diol + S-adenosyl-L-methionine = a 5-methoxy-2-methyl-3-(all-trans-polyprenyl)benzene-1,4-diol + S-adenosyl-L-homocysteine + H(+). It participates in quinol/quinone metabolism; menaquinone biosynthesis; menaquinol from 1,4-dihydroxy-2-naphthoate: step 2/2. The protein operates within cofactor biosynthesis; ubiquinone biosynthesis. Methyltransferase required for the conversion of demethylmenaquinol (DMKH2) to menaquinol (MKH2) and the conversion of 2-polyprenyl-6-methoxy-1,4-benzoquinol (DDMQH2) to 2-polyprenyl-3-methyl-6-methoxy-1,4-benzoquinol (DMQH2). This chain is Ubiquinone/menaquinone biosynthesis C-methyltransferase UbiE, found in Rubrivivax gelatinosus (strain NBRC 100245 / IL144).